Reading from the N-terminus, the 457-residue chain is Flavin-containing monooxygenase FMO GS-OX2 (457 aa).

An FAD-binding site is contributed by 17-22 (GAGAAG). Residue 211 to 216 (GNFASG) participates in NADP(+) binding.

The protein belongs to the FMO family.

It catalyses the reaction a (Z)-omega-(methylsulfanyl)-N-sulfo-alkylhydroximate S-glucoside + NADPH + O2 + H(+) = a (Z)-omega-(methylsulfinyl)-alkyl-glucosinolate + NADP(+) + H2O. Catalyzes the conversion of methylthioalkyl glucosinolates of any chain length into methylsulfinylalkyl glucosinolates. This Arabidopsis thaliana (Mouse-ear cress) protein is Flavin-containing monooxygenase FMO GS-OX2 (FMOGS-OX2).